We begin with the raw amino-acid sequence, 1264 residues long: Phosphatidylinositol 3,4,5-trisphosphate 5-phosphatase 2 (1264 aa).

The SH2 domain maps to 26 to 122; it reads WYHRDLSRAA…GLVCALLLPV (97 aa). The segment covering 124–137 has biased composition (basic and acidic residues); sequence REREPDPPDDRDVS. The segment at 124–182 is disordered; the sequence is REREPDPPDDRDVSDGEDEKPPLPPRSGSTSISAPVGPGSPPAAPETPTTPAAESAPNG. Serine 137 carries the post-translational modification Phosphoserine. Positions 169–180 are enriched in low complexity; sequence ETPTTPAAESAP. Threonine 170 is modified (phosphothreonine). A phosphoserine mark is found at serine 246 and serine 358. Residue tyrosine 892 is modified to Phosphotyrosine. Phosphoserine is present on serine 896. Residues 903–1123 are disordered; that stretch reads GAKSKAPSVS…TFLGEVASGD (221 aa). Pro residues predominate over residues 944-954; the sequence is PPPTGRPPAPP. An SH3-binding motif is present at residues 950–955; sequence PPAPPR. A compositionally biased stretch (basic and acidic residues) spans 957-971; sequence ASREEPLTPRLKAEG. A Phosphothreonine modification is found at threonine 964. The NPXY motif signature appears at 989–992; it reads NPAY. Tyrosine 992 is modified (phosphotyrosine). Pro residues-rich tracts occupy residues 1002-1017, 1054-1065, and 1093-1110; these read LLPPEPPSPARAPVPP, LPPPDFPPPPLP, and GPPPPKAHPRPPLPPGPS. Position 1137 is a phosphoserine (serine 1137). Positions 1140-1178 are disordered; the sequence is DYAPAGPGRSVLLPGPLELQPPRGLPSDYGRPLSFPPPR. Residues tyrosine 1141 and tyrosine 1168 each carry the phosphotyrosine modification. One can recognise an SAM domain in the interval 1210-1264; sequence WLRAIGLERYEEGLVHNGWDDLEFLSDITEEDLEEAGVQDPAHKRLLLDTLQLSK. At serine 1263 the chain carries Phosphoserine.

Belongs to the inositol 1,4,5-trisphosphate 5-phosphatase family. As to quaternary structure, interacts with tyrosine phosphorylated form of SHC1. Interacts with EGFR. Upon stimulation by the EGF signaling pathway, it forms a complex with SHC1 and EGFR. Interacts with cytoskeletal protein SORBS3/vinexin, promoting its localization to the periphery of cells. Forms a complex with filamin (FLNA or FLNB), actin, GPIb (GP1BA or GP1BB) that regulates cortical and submembraneous actin. Interacts with c-Met/MET, when c-Met/MET is phosphorylated on 'Tyr-1356'. Interacts with p130Cas/BCAR1. Interacts with CENTD3/ARAP3 via its SAM domain. Interacts with c-Cbl/CBL and CAP/SORBS1. Interacts with activated EPHA2 receptor. Interacts with receptor FCGR2A. Interacts with receptor FCGR2B. Interacts with tyrosine kinase ABL1. Interacts with tyrosine kinase TEC. Interacts with CSF1R. Interacts (via N-terminus) with SH3YL1 (via SH3 domain). Interacts with FCRL6 (tyrosine phosphorylated form). Interacts (via SH2 domain) with tyrosine phosphorylated KLRC1 (via ITIM). Interacts with NEDD9/HEF1. Post-translationally, tyrosine phosphorylated by the members of the SRC family after exposure to a diverse array of extracellular stimuli such as insulin, growth factors such as EGF or PDGF, chemokines, integrin ligands and hypertonic and oxidative stress. May be phosphorylated upon IgG receptor FCGR2B-binding. Phosphorylated at Tyr-992 following cell attachment and spreading. Phosphorylated at Tyr-1168 following EGF signaling pathway stimulation. Phosphorylated at Thr-964 in response to PDGF.

The protein resides in the cytoplasm. Its subcellular location is the cytosol. It localises to the membrane. The protein localises to the cell projection. It is found in the filopodium. The protein resides in the lamellipodium. Its subcellular location is the basal cell membrane. It localises to the nucleus. The protein localises to the nucleus speckle. It is found in the cytoskeleton. The protein resides in the spindle pole. The catalysed reaction is a 1,2-diacyl-sn-glycero-3-phospho-(1D-myo-inositol-3,4,5-trisphosphate) + H2O = a 1,2-diacyl-sn-glycero-3-phospho-(1D-myo-inositol-3,4-bisphosphate) + phosphate. It catalyses the reaction 1,2-dioctanoyl-sn-glycero-3-phospho-(1D-myo-inositol-3,4,5-trisphosphate) + H2O = 1,2-dioctanoyl-sn-glycero-3-phospho-(1D-myo-inositol-3,4-bisphosphate) + phosphate. It carries out the reaction 1,2-dihexadecanoyl-sn-glycero-3-phospho-(1D-myo-inositol-3,4,5-trisphosphate) + H2O = 1,2-dihexadecanoyl-sn-glycero-3-phospho-(1D-myo-inositol-3,4-bisphosphate) + phosphate. With respect to regulation, activated upon translocation to the sites of synthesis of PtdIns(3,4,5)P3 in the membrane. Enzymatic activity is enhanced in the presence of phosphatidylserine. In terms of biological role, phosphatidylinositol (PtdIns) phosphatase that specifically hydrolyzes the 5-phosphate of phosphatidylinositol-3,4,5-trisphosphate (PtdIns(3,4,5)P3) to produce PtdIns(3,4)P2, thereby negatively regulating the PI3K (phosphoinositide 3-kinase) pathways. Required for correct mitotic spindle orientation and therefore progression of mitosis. Plays a central role in regulation of PI3K-dependent insulin signaling, although the precise molecular mechanisms and signaling pathways remain unclear. While overexpression reduces both insulin-stimulated MAP kinase and Akt activation, its absence does not affect insulin signaling or GLUT4 trafficking. Confers resistance to dietary obesity. May act by regulating AKT2, but not AKT1, phosphorylation at the plasma membrane. Part of a signaling pathway that regulates actin cytoskeleton remodeling. Required for the maintenance and dynamic remodeling of actin structures as well as in endocytosis, having a major impact on ligand-induced EGFR internalization and degradation. Participates in regulation of cortical and submembraneous actin by hydrolyzing PtdIns(3,4,5)P3 thereby regulating membrane ruffling. Regulates cell adhesion and cell spreading. Required for HGF-mediated lamellipodium formation, cell scattering and spreading. Acts as a negative regulator of EPHA2 receptor endocytosis by inhibiting via PI3K-dependent Rac1 activation. Acts as a regulator of neuritogenesis by regulating PtdIns(3,4,5)P3 level and is required to form an initial protrusive pattern, and later, maintain proper neurite outgrowth. Acts as a negative regulator of the FC-gamma-RIIA receptor (FCGR2A). Mediates signaling from the FC-gamma-RIIB receptor (FCGR2B), playing a central role in terminating signal transduction from activating immune/hematopoietic cell receptor systems. Involved in EGF signaling pathway. Upon stimulation by EGF, it is recruited by EGFR and dephosphorylates PtdIns(3,4,5)P3. Plays a negative role in regulating the PI3K-PKB pathway, possibly by inhibiting PKB activity. Down-regulates Fc-gamma-R-mediated phagocytosis in macrophages independently of INPP5D/SHIP1. In macrophages, down-regulates NF-kappa-B-dependent gene transcription by regulating macrophage colony-stimulating factor (M-CSF)-induced signaling. Plays a role in the localization of AURKA and NEDD9/HEF1 to the basolateral membrane at interphase in polarized cysts, thereby mediates cell cycle homeostasis, cell polarization and cilia assembly. Additionally promotion of cilia growth is also facilitated by hydrolysis of (PtdIns(3,4,5)P3) to PtdIns(3,4)P2. Promotes formation of apical membrane-initiation sites during the initial stages of lumen formation via Rho family-induced actin filament organization and CTNNB1 localization to cell-cell contacts. May also hydrolyze PtdIns(1,3,4,5)P4, and could thus affect the levels of the higher inositol polyphosphates like InsP6. Involved in endochondral ossification. This Canis lupus familiaris (Dog) protein is Phosphatidylinositol 3,4,5-trisphosphate 5-phosphatase 2.